Consider the following 246-residue polypeptide: Peroxisomal membrane protein 11A (246 aa).

Residues 1-93 (MDAFIRVANQ…LCLTLANLNR (93 aa)) lie on the Cytoplasmic side of the membrane. A helical membrane pass occupies residues 94–114 (VVYYICDTVLWAKSVGLTSGV). Residues 115–217 (NREKWQRWAA…LNQLGIYKSN (103 aa)) are Lumenal-facing. A helical membrane pass occupies residues 218–238 (LGVVGLGGLISSLAGLLTVVY). Positions 218-238 (LGVVGLGGLISSLAGLLTVVY) are required for homodimerization, interaction with PEX11G, and peroxisomal localization. Over 239 to 246 (PQLKLKAR) the chain is Cytoplasmic.

Belongs to the peroxin-11 family. Homodimer. Heterodimer with PEX11G. Probably interacts with COPB2 and COPA. Interacts with PEX19. Interacts with FIS1. In terms of tissue distribution, strongly expressed in liver and at lower levels in heart, brain, kidney and testis.

Its subcellular location is the peroxisome membrane. Its function is as follows. May be involved in peroxisomal proliferation and may regulate peroxisomes division. May mediate binding of coatomer proteins to the peroxisomal membrane. Promotes membrane protrusion and elongation on the peroxisomal surface. The sequence is that of Peroxisomal membrane protein 11A (Pex11a) from Mus musculus (Mouse).